The following is an 808-amino-acid chain: MAHYLMHGTLHATVYEVDKLHSGGISGFFGKILANVEGTIGIGKGVTQLYATIDLERARVGRTRIIKDEPNNPKWYESFHIYCAHMASNVVFTVKDDNPIGATLIGRAYVPVEELIRGDQVDRWVEILDEDKNPIEGDSKIHVKLQFFDVKKDSNWNMGIKGARYLGVPYTFYSQRRGCRVSLYQDAHVPDGFIPKIPLAGGKYYEPHRCWEDVFDAITNARHLIYITGWSVYTEITLIRDSRRPKPGGDVTLGELLKQKASEGVKVLMLVWDDRTSVGLLKKDGLMATHDEETANYFQNTDVHCVLCPRNPDDGGSFVQGLQISTMFTHHQKIVVVDGEMPSGESQMRRIVSFVGGIDLCDGRYDTPFHSLFRTLDTAHHDDFHQPNFAGSSITKGGPREPWHDIHSRLEGPVAWDVLFNFEQRWRQQGGKDVLVNLRELDNIIIPPSPVMFPDDHETWNVQLFRSIDGGAAFGFPETPEEAARAGLVSGKDNIIDRSIQDAYINAIRRAKNFIYIENQYFLGSSFDWSSDDIKREDINALHLIPKELSLKIVSKIERGERFTVYVVVPMWPEGVPESASVQAILDWQRRTMEMMYKDIIQALRAKDREEDPRNYLTFFCLGNREVKKSGEYEPSERPEDDSDYIRAQEARRFMIYVHTKMMIVDDEYIIVGSANINQRSMDGARDSEIAMGAYQPYHLTINQPARGQIHGFRMALWYEHLGMLDDTFLEPENIECVQKVNRVAGKYWDLYASELLEHDLPGHLLRYPIGVSSEGDVTELPGTEFFPDTKARVLGAKSDYLPPILTT.

Residues 1-125 (MAHYLMHGTL…IRGDQVDRWV (125 aa)) enclose the C2 domain. Residue aspartate 186 coordinates Ca(2+). The 39-residue stretch at 326 to 364 (TMFTHHQKIVVVDGEMPSGESQMRRIVSFVGGIDLCDGR) folds into the PLD phosphodiesterase 1 domain. Active-site residues include histidine 331, lysine 333, and aspartate 338. Histidine 331 contacts a 1,2-diacyl-sn-glycero-3-phosphate. Histidine 370 and histidine 404 together coordinate Ca(2+). The a 1,2-diacyl-sn-glycero-3-phosphate site is built by glutamine 520 and histidine 659. The PLD phosphodiesterase 2 domain maps to 654–681 (FMIYVHTKMMIVDDEYIIVGSANINQRS). Residues histidine 659, lysine 661, and aspartate 666 contribute to the active site. Glutamate 720 provides a ligand contact to Ca(2+).

It belongs to the phospholipase D family. C2-PLD subfamily. Ca(2+) is required as a cofactor.

The enzyme catalyses a 1,2-diacyl-sn-glycero-3-phosphocholine + H2O = a 1,2-diacyl-sn-glycero-3-phosphate + choline + H(+). In terms of biological role, hydrolyzes glycerol-phospholipids at the terminal phosphodiesteric bond. Plays an important role in various cellular processes. The sequence is that of Phospholipase D alpha 1 from Carica papaya (Papaya).